A 255-amino-acid polypeptide reads, in one-letter code: Type III pantothenate kinase (255 aa).

Residue 7–14 (DVGNTRLK) participates in ATP binding. Substrate contacts are provided by residues Tyr96 and 103–106 (GADR). The active-site Proton acceptor is Asp105. ATP is bound at residue Thr133. Residue Thr183 coordinates substrate.

It belongs to the type III pantothenate kinase family. In terms of assembly, homodimer. It depends on NH4(+) as a cofactor. The cofactor is K(+).

The protein resides in the cytoplasm. The catalysed reaction is (R)-pantothenate + ATP = (R)-4'-phosphopantothenate + ADP + H(+). Its pathway is cofactor biosynthesis; coenzyme A biosynthesis; CoA from (R)-pantothenate: step 1/5. Functionally, catalyzes the phosphorylation of pantothenate (Pan), the first step in CoA biosynthesis. This Albidiferax ferrireducens (strain ATCC BAA-621 / DSM 15236 / T118) (Rhodoferax ferrireducens) protein is Type III pantothenate kinase.